The following is a 58-amino-acid chain: Proteinase inhibitor PSKP-2 (58 aa).

In terms of domain architecture, Kazal-like spans 1–58 (VIEPDCKKYEGKKCPPDIALVCGTNGREYYNECALCVFIRDSTLKADKAIKIKKWGKC). 3 cysteine pairs are disulfide-bonded: C6-C36, C14-C33, and C22-C58.

Skin.

Its subcellular location is the secreted. Functionally, may have a role in mucosal defense against microbes by interacting directly with their membranes. The chain is Proteinase inhibitor PSKP-2 from Phyllomedusa sauvagei (Sauvage's leaf frog).